The primary structure comprises 370 residues: UDP-N-acetylglucosamine--N-acetylmuramyl-(pentapeptide) pyrophosphoryl-undecaprenol N-acetylglucosamine transferase (370 aa).

UDP-N-acetyl-alpha-D-glucosamine contacts are provided by residues 10–12 (TGG), asparagine 126, serine 200, isoleucine 255, and glutamine 300.

It belongs to the glycosyltransferase 28 family. MurG subfamily.

It is found in the cell membrane. It catalyses the reaction Mur2Ac(oyl-L-Ala-gamma-D-Glu-L-Lys-D-Ala-D-Ala)-di-trans,octa-cis-undecaprenyl diphosphate + UDP-N-acetyl-alpha-D-glucosamine = beta-D-GlcNAc-(1-&gt;4)-Mur2Ac(oyl-L-Ala-gamma-D-Glu-L-Lys-D-Ala-D-Ala)-di-trans,octa-cis-undecaprenyl diphosphate + UDP + H(+). It participates in cell wall biogenesis; peptidoglycan biosynthesis. Its function is as follows. Cell wall formation. Catalyzes the transfer of a GlcNAc subunit on undecaprenyl-pyrophosphoryl-MurNAc-pentapeptide (lipid intermediate I) to form undecaprenyl-pyrophosphoryl-MurNAc-(pentapeptide)GlcNAc (lipid intermediate II). The protein is UDP-N-acetylglucosamine--N-acetylmuramyl-(pentapeptide) pyrophosphoryl-undecaprenol N-acetylglucosamine transferase of Lactobacillus delbrueckii subsp. bulgaricus (strain ATCC 11842 / DSM 20081 / BCRC 10696 / JCM 1002 / NBRC 13953 / NCIMB 11778 / NCTC 12712 / WDCM 00102 / Lb 14).